Here is a 491-residue protein sequence, read N- to C-terminus: Lysosomal Pro-X carboxypeptidase (491 aa).

Positions 1–17 (MGCRALLLLSFLLLGAA) are cleaved as a signal peptide. The propeptide occupies 18 to 43 (TTIPPRLKTLGSPHLSASPTPDPAVA). N-linked (GlcNAc...) asparagine glycosylation is present at N99. The Charge relay system role is filled by S177. The tract at residues 192 to 332 (HIVVGALAAS…QNIFQALSVY (141 aa)) is SKS domain. 4 disulfide bridges follow: C213–C370, C231–C308, C262–C341, and C362–C392. N-linked (GlcNAc...) asparagine glycosylation is found at N315, N334, and N343. An N-linked (GlcNAc...) asparagine glycan is attached at N413. Catalysis depends on charge relay system residues D428 and H453.

Belongs to the peptidase S28 family. As to quaternary structure, homodimer.

The protein resides in the lysosome. It catalyses the reaction Cleavage of a -Pro-|-Xaa bond to release a C-terminal amino acid.. Functionally, cleaves C-terminal amino acids linked to proline in peptides such as angiotensin II, III and des-Arg9-bradykinin. This cleavage occurs at acidic pH, but enzymatic activity is retained with some substrates at neutral pH. The chain is Lysosomal Pro-X carboxypeptidase (Prcp) from Mus musculus (Mouse).